A 160-amino-acid polypeptide reads, in one-letter code: Leptin (160 aa).

Positions 1-17 (MDYTLALALSLLQLSMC) are cleaved as a signal peptide. Cys-109 and Cys-160 are oxidised to a cystine.

It belongs to the leptin family.

It localises to the secreted. In terms of biological role, may function as part of a signaling pathway that acts to regulate the size of the body fat depot. This is Leptin (lep) from Tetraodon nigroviridis (Spotted green pufferfish).